Consider the following 386-residue polypeptide: MSSSQRAKETVVITGGGGYFGHRLGCTLHEKGVHVILFDIRKPDQELPEGIHFVQGDVRSLSQLEDVVAGASCVFHTASYGMSGKEQLHRQKIEAINVRGTENIIQACINTNVPRLVYTSTFNVIFGGQTIRDGDESLPYLPQDAFVDNYSRTKTVAEMFVLKMNNQELKNNSGFLRTCSLRAAGIYGPGEQRHLPRIISALEKGMFLFVYGDNPLVQFVHVDNLISAHILAAEALTSEKKYIAAGQPYFISDGPPVNNFEFFRPLVEGLGYKFPSLRFPLSLVYFFAFLTEWIHFFISPVCDFQPILTRAEVFKTGVTHYFKIEKATRELGFEPQPFTMQDVAEWFKNHGYGKQDKKIKSNYLIWDIIFILLVTVVLLSWLPSSE.

Tyr150 (proton acceptor) is an active-site residue. Lys154 serves as a coordination point for NAD(+). The next 2 membrane-spanning stretches (helical) occupy residues 279–299 (FPLSLVYFFAFLTEWIHFFIS) and 363–383 (YLIWDIIFILLVTVVLLSWLP).

Belongs to the 3-beta-HSD family.

It localises to the membrane. The chain is Short-chain dehydrogenase/reductase family 42E member 1 (sdr42e1) from Xenopus laevis (African clawed frog).